The primary structure comprises 365 residues: UDP-N-acetylglucosamine--N-acetylmuramyl-(pentapeptide) pyrophosphoryl-undecaprenol N-acetylglucosamine transferase (365 aa).

Residues 17 to 19, Asn129, Arg167, Ser194, Ile250, 269 to 274, and Gln295 each bind UDP-N-acetyl-alpha-D-glucosamine; these read TGG and ALTVSE.

Belongs to the glycosyltransferase 28 family. MurG subfamily.

The protein resides in the cell inner membrane. The catalysed reaction is di-trans,octa-cis-undecaprenyl diphospho-N-acetyl-alpha-D-muramoyl-L-alanyl-D-glutamyl-meso-2,6-diaminopimeloyl-D-alanyl-D-alanine + UDP-N-acetyl-alpha-D-glucosamine = di-trans,octa-cis-undecaprenyl diphospho-[N-acetyl-alpha-D-glucosaminyl-(1-&gt;4)]-N-acetyl-alpha-D-muramoyl-L-alanyl-D-glutamyl-meso-2,6-diaminopimeloyl-D-alanyl-D-alanine + UDP + H(+). Its pathway is cell wall biogenesis; peptidoglycan biosynthesis. Its function is as follows. Cell wall formation. Catalyzes the transfer of a GlcNAc subunit on undecaprenyl-pyrophosphoryl-MurNAc-pentapeptide (lipid intermediate I) to form undecaprenyl-pyrophosphoryl-MurNAc-(pentapeptide)GlcNAc (lipid intermediate II). The sequence is that of UDP-N-acetylglucosamine--N-acetylmuramyl-(pentapeptide) pyrophosphoryl-undecaprenol N-acetylglucosamine transferase from Shewanella piezotolerans (strain WP3 / JCM 13877).